A 230-amino-acid chain; its full sequence is Large ribosomal subunit protein uL1 (230 aa).

The protein belongs to the universal ribosomal protein uL1 family. As to quaternary structure, part of the 50S ribosomal subunit.

Its function is as follows. Binds directly to 23S rRNA. The L1 stalk is quite mobile in the ribosome, and is involved in E site tRNA release. Functionally, protein L1 is also a translational repressor protein, it controls the translation of the L11 operon by binding to its mRNA. This is Large ribosomal subunit protein uL1 from Leptospira borgpetersenii serovar Hardjo-bovis (strain JB197).